A 351-amino-acid chain; its full sequence is Glycerol-1-phosphate dehydrogenase [NAD(P)+] (351 aa).

Residues 93–97 (GKVLD) and 115–118 (TTAS) each bind NAD(+). Aspartate 120 lines the substrate pocket. Serine 124 contacts NAD(+). Aspartate 167 is a binding site for substrate. Aspartate 167 and histidine 247 together coordinate Zn(2+). Histidine 251 contributes to the substrate binding site. Histidine 263 contributes to the Zn(2+) binding site.

This sequence belongs to the glycerol-1-phosphate dehydrogenase family. Zn(2+) serves as cofactor.

It localises to the cytoplasm. It carries out the reaction sn-glycerol 1-phosphate + NAD(+) = dihydroxyacetone phosphate + NADH + H(+). It catalyses the reaction sn-glycerol 1-phosphate + NADP(+) = dihydroxyacetone phosphate + NADPH + H(+). It functions in the pathway membrane lipid metabolism; glycerophospholipid metabolism. In terms of biological role, catalyzes the NAD(P)H-dependent reduction of dihydroxyacetonephosphate (DHAP or glycerone phosphate) to glycerol 1-phosphate (G1P). The G1P thus generated is used as the glycerophosphate backbone of phospholipids in the cellular membranes of Archaea. The chain is Glycerol-1-phosphate dehydrogenase [NAD(P)+] from Archaeoglobus fulgidus (strain ATCC 49558 / DSM 4304 / JCM 9628 / NBRC 100126 / VC-16).